We begin with the raw amino-acid sequence, 494 residues long: Cytochrome P450 2G1 (494 aa).

Cys-439 contributes to the heme binding site.

This sequence belongs to the cytochrome P450 family. It depends on heme as a cofactor. As to expression, olfactory epithelium.

It is found in the endoplasmic reticulum membrane. It localises to the microsome membrane. The enzyme catalyses an organic molecule + reduced [NADPH--hemoprotein reductase] + O2 = an alcohol + oxidized [NADPH--hemoprotein reductase] + H2O + H(+). In terms of biological role, cytochromes P450 are a group of heme-thiolate monooxygenases. This isozyme seems to be implicated in olfaction. In Oryctolagus cuniculus (Rabbit), this protein is Cytochrome P450 2G1 (CYP2G1).